A 300-amino-acid chain; its full sequence is Homoserine kinase (300 aa).

86–96 (PVARGLGSSAT) provides a ligand contact to ATP.

Belongs to the GHMP kinase family. Homoserine kinase subfamily.

The protein resides in the cytoplasm. It carries out the reaction L-homoserine + ATP = O-phospho-L-homoserine + ADP + H(+). It functions in the pathway amino-acid biosynthesis; L-threonine biosynthesis; L-threonine from L-aspartate: step 4/5. Its function is as follows. Catalyzes the ATP-dependent phosphorylation of L-homoserine to L-homoserine phosphate. In Persephonella marina (strain DSM 14350 / EX-H1), this protein is Homoserine kinase.